Reading from the N-terminus, the 383-residue chain is Ribosomal RNA large subunit methyltransferase G (383 aa).

The protein belongs to the methyltransferase superfamily. RlmG family.

The protein resides in the cytoplasm. It carries out the reaction guanosine(1835) in 23S rRNA + S-adenosyl-L-methionine = N(2)-methylguanosine(1835) in 23S rRNA + S-adenosyl-L-homocysteine + H(+). In terms of biological role, specifically methylates the guanine in position 1835 (m2G1835) of 23S rRNA. The sequence is that of Ribosomal RNA large subunit methyltransferase G from Shewanella amazonensis (strain ATCC BAA-1098 / SB2B).